Reading from the N-terminus, the 369-residue chain is Chaperone protein DnaJ (369 aa).

The region spanning 5–70 is the J domain; it reads DYYEVLGVGR…NKRAAYDQFG (66 aa). The CR-type zinc finger occupies 128 to 206; it reads GAETQIRIPR…CHGAGWVKRQ (79 aa). Residues cysteine 141, cysteine 144, cysteine 158, cysteine 161, cysteine 180, cysteine 183, cysteine 194, and cysteine 197 each coordinate Zn(2+). CXXCXGXG motif repeat units lie at residues 141-148, 158-165, 180-187, and 194-201; these read CDTCHGSG, CPTCNGHG, CSHCQGSG, and CGDCHGAG.

Belongs to the DnaJ family. As to quaternary structure, homodimer. The cofactor is Zn(2+).

It localises to the cytoplasm. In terms of biological role, participates actively in the response to hyperosmotic and heat shock by preventing the aggregation of stress-denatured proteins and by disaggregating proteins, also in an autonomous, DnaK-independent fashion. Unfolded proteins bind initially to DnaJ; upon interaction with the DnaJ-bound protein, DnaK hydrolyzes its bound ATP, resulting in the formation of a stable complex. GrpE releases ADP from DnaK; ATP binding to DnaK triggers the release of the substrate protein, thus completing the reaction cycle. Several rounds of ATP-dependent interactions between DnaJ, DnaK and GrpE are required for fully efficient folding. Also involved, together with DnaK and GrpE, in the DNA replication of plasmids through activation of initiation proteins. The sequence is that of Chaperone protein DnaJ from Nitrosomonas europaea (strain ATCC 19718 / CIP 103999 / KCTC 2705 / NBRC 14298).